The chain runs to 329 residues: MHITIIGGGAWGATLAQVLTDNNHQVLVYDLNKNYINRINQGMHSIFDLPLKNIQSTSDLEISLLYSDLLVLAVPTKAMRQVLQQIALLSKTPKSFVNVSKGIEPSTFFRVSQIVNQIIPPSLLQNYASLMGPSHAEEVILRKVTLLTAASSDLSFATEIQKIFSNPIYLKIYTSSDLVGNEVCSALKNVLALINGILVAKGFGINSQAALISRGIVEMSRLVTFYHGSFKTVLGLPGLGDLIVTAFSTHSRNFSAGQKIGAGKTYEQIMSESDQVIEGFQSLVAFYQLQSKHQLDLPLIKAAYQLIYECRPFELVFDELMQRPFKSDC.

NADPH is bound by residues W11 and K101. Residues K101, G132, and S134 each coordinate sn-glycerol 3-phosphate. A136 is a binding site for NADPH. Residues K188, D241, S251, R252, and N253 each coordinate sn-glycerol 3-phosphate. K188 serves as the catalytic Proton acceptor. R252 contributes to the NADPH binding site. Positions 276 and 278 each coordinate NADPH.

It belongs to the NAD-dependent glycerol-3-phosphate dehydrogenase family.

Its subcellular location is the cytoplasm. The enzyme catalyses sn-glycerol 3-phosphate + NAD(+) = dihydroxyacetone phosphate + NADH + H(+). It catalyses the reaction sn-glycerol 3-phosphate + NADP(+) = dihydroxyacetone phosphate + NADPH + H(+). The protein operates within membrane lipid metabolism; glycerophospholipid metabolism. Catalyzes the reduction of the glycolytic intermediate dihydroxyacetone phosphate (DHAP) to sn-glycerol 3-phosphate (G3P), the key precursor for phospholipid synthesis. This chain is Glycerol-3-phosphate dehydrogenase [NAD(P)+], found in Phytoplasma australiense.